Consider the following 202-residue polypeptide: N-(5'-phosphoribosyl)anthranilate isomerase (202 aa).

It belongs to the TrpF family.

It catalyses the reaction N-(5-phospho-beta-D-ribosyl)anthranilate = 1-(2-carboxyphenylamino)-1-deoxy-D-ribulose 5-phosphate. It functions in the pathway amino-acid biosynthesis; L-tryptophan biosynthesis; L-tryptophan from chorismate: step 3/5. This chain is N-(5'-phosphoribosyl)anthranilate isomerase, found in Listeria monocytogenes serovar 1/2a (strain ATCC BAA-679 / EGD-e).